The following is a 566-amino-acid chain: Nitrate/nitrite sensor protein NarQ (566 aa).

Topologically, residues 1-13 are cytoplasmic; the sequence is MIVKRPVSASLAR. The helical transmembrane segment at 14–34 threads the bilayer; the sequence is AFFYIVLLSILSTGIALLTLA. The Periplasmic portion of the chain corresponds to 35 to 146; sequence SSLRDAEAIN…LALQHYAERK (112 aa). Residues 147–167 traverse the membrane as a helical segment; that stretch reads MLLVVAISLAGGIGIFTLVFF. Topologically, residues 168-566 are cytoplasmic; the sequence is TLRRIRHQVV…SAEGEESQLM (399 aa). Residues 174-227 enclose the HAMP domain; that stretch reads HQVVAPLNQLVTASQRIEHGQFDSPPLDTNLPNELGLLAKTFNQMSSELHKLYR. The Histidine kinase domain occupies 364–559; the sequence is TIARELHDSL…LVSISFRSAE (196 aa). Phosphohistidine; by autocatalysis is present on His370.

The protein localises to the cell inner membrane. It carries out the reaction ATP + protein L-histidine = ADP + protein N-phospho-L-histidine.. In terms of biological role, acts as a sensor for nitrate/nitrite and transduces signal of nitrate/nitrite availability to the NarL/NarP proteins. NarQ probably activates NarL and NarP by phosphorylation. NarQ probably negatively regulates the NarL protein by dephosphorylation. In Escherichia coli (strain K12), this protein is Nitrate/nitrite sensor protein NarQ (narQ).